Consider the following 197-residue polypeptide: Probable GTP-binding protein EngB (197 aa).

Residues 22-195 (NLPEIAFVGR…VDYLFDDLVE (174 aa)) enclose the EngB-type G domain. GTP contacts are provided by residues 30 to 37 (GRSNVGKS), 57 to 61 (GKTRL), 75 to 78 (DLPG), 142 to 145 (TKSD), and 174 to 176 (FSS). S37 and T59 together coordinate Mg(2+).

The protein belongs to the TRAFAC class TrmE-Era-EngA-EngB-Septin-like GTPase superfamily. EngB GTPase family. It depends on Mg(2+) as a cofactor.

Its function is as follows. Necessary for normal cell division and for the maintenance of normal septation. The protein is Probable GTP-binding protein EngB of Clostridium perfringens (strain SM101 / Type A).